The chain runs to 1072 residues: Isoleucine--tRNA ligase, cytoplasmic (1072 aa).

The short motif at 47–57 (PFATGTPHYGH) is the 'HIGH' region element. Lys486 participates in a covalent cross-link: Glycyl lysine isopeptide (Lys-Gly) (interchain with G-Cter in ubiquitin). Residues 602-606 (KMSKS) carry the 'KMSKS' region motif. Lys605 serves as a coordination point for ATP. Phosphoserine occurs at positions 829 and 1059.

It belongs to the class-I aminoacyl-tRNA synthetase family.

The protein localises to the cytoplasm. The enzyme catalyses tRNA(Ile) + L-isoleucine + ATP = L-isoleucyl-tRNA(Ile) + AMP + diphosphate. The polypeptide is Isoleucine--tRNA ligase, cytoplasmic (ILS1) (Saccharomyces cerevisiae (strain ATCC 204508 / S288c) (Baker's yeast)).